The primary structure comprises 481 residues: Phosphoglycerate kinase 1, chloroplastic (481 aa).

The transit peptide at 1 to 75 (MASAAASSAF…VRGKGSRGVV (75 aa)) directs the protein to the chloroplast. A Phosphoserine modification is found at Ser81. (2R)-3-phosphoglycerate is bound by residues Ala99, Asp100, Asn102, Arg116, Thr138, His139, Gly141, Arg142, Arg197, His229, and Arg230. Residue Gly275 coordinates ADP. CDP is bound at residue Gly275. AMP is bound by residues Lys277 and Lys281. Position 281 (Lys281) interacts with ATP. Gly299 is an ADP binding site. Gly299 is a CDP binding site. Positions 300 and 372 each coordinate AMP. ATP contacts are provided by Gly300 and Gly372. CDP-binding residues include Gly397 and Phe402. Phe402 is a binding site for ADP. Glu403 is an AMP binding site. Residues Glu403, Asp434, and Ser435 each contribute to the ATP site. Asp434 provides a ligand contact to Mg(2+).

It belongs to the phosphoglycerate kinase family. In terms of assembly, monomer. Binds to FTSZ2-1 and FTSZ2-2. Mg(2+) is required as a cofactor.

It is found in the plastid. The protein resides in the chloroplast. The catalysed reaction is (2R)-3-phosphoglycerate + ATP = (2R)-3-phospho-glyceroyl phosphate + ADP. The protein operates within carbohydrate biosynthesis; Calvin cycle. Functionally, may trigger the phosphorylation of FTSZ2-1 and FTSZ2-2. The chain is Phosphoglycerate kinase 1, chloroplastic from Arabidopsis thaliana (Mouse-ear cress).